The chain runs to 875 residues: Translation initiation factor IF-2 (875 aa).

3 disordered regions span residues 1 to 20 (MSDS…LKTA), 47 to 102 (LMGR…LREA), and 126 to 246 (EEER…DRRG). Residues 54-66 (AAPTAAPAAAATP) show a composition bias toward low complexity. A compositionally biased stretch (pro residues) spans 67-85 (APTPVAPPPPPPPPPPPPS). 2 stretches are compositionally biased toward basic and acidic residues: residues 88–102 (RETR…LREA) and 126–140 (EEER…RAEA). 2 stretches are compositionally biased toward low complexity: residues 141–195 (EAAA…PAAP) and 202–221 (PAAP…PAAP). Basic and acidic residues predominate over residues 223–246 (KRPELAAKKPAHPQRDRKTEDRRG). Positions 374-544 (ARPPVVTIMG…LLQAELLELK (171 aa)) constitute a tr-type G domain. The segment at 383-390 (GHVDHGKT) is G1. 383–390 (GHVDHGKT) provides a ligand contact to GTP. The G2 stretch occupies residues 408–412 (GITQH). The segment at 430-433 (DTPG) is G3. Residues 430–434 (DTPGH) and 484–487 (TKAD) contribute to the GTP site. A G4 region spans residues 484-487 (TKAD). Positions 520–522 (SAK) are G5.

This sequence belongs to the TRAFAC class translation factor GTPase superfamily. Classic translation factor GTPase family. IF-2 subfamily.

The protein resides in the cytoplasm. Functionally, one of the essential components for the initiation of protein synthesis. Protects formylmethionyl-tRNA from spontaneous hydrolysis and promotes its binding to the 30S ribosomal subunits. Also involved in the hydrolysis of GTP during the formation of the 70S ribosomal complex. This chain is Translation initiation factor IF-2, found in Novosphingobium aromaticivorans (strain ATCC 700278 / DSM 12444 / CCUG 56034 / CIP 105152 / NBRC 16084 / F199).